The primary structure comprises 172 residues: Allergen Bos d 2 (172 aa).

The first 16 residues, methionine 1 to alanine 16, serve as a signal peptide directing secretion. Glutamine 17 is modified (pyrrolidone carboxylic acid). 2 cysteine pairs are disulfide-bonded: cysteine 60–cysteine 64 and cysteine 79–cysteine 170.

This sequence belongs to the calycin superfamily. Lipocalin family. As to expression, found exclusively in skin. Produced in sweat glands and transported to the skin surface.

The protein resides in the secreted. In terms of biological role, probable pheromone carrier. The polypeptide is Allergen Bos d 2 (Bos taurus (Bovine)).